The sequence spans 191 residues: MSNINVIDILKESDALLEGHFLLSSGRHSNRYCQCAKLLQCPQKAEKVISVIAEKLKEVDFNIIVGPAMGGVIVSYELARQTNKPGIFAERKEGVMCIRRGFEIKKGDKVIISEDVVTTGKSSLEVAKVIEEMGGEVVGIACIVDRRAEDIKTNYPIYSACKLEIETYEKDNCELCKKNIPFVKPGSREQK.

A 5-phospho-alpha-D-ribose 1-diphosphate-binding site is contributed by 114-122 (EDVVTTGKS). Residues T118 and R146 each coordinate orotate.

Belongs to the purine/pyrimidine phosphoribosyltransferase family. PyrE subfamily. Homodimer. The cofactor is Mg(2+).

The enzyme catalyses orotidine 5'-phosphate + diphosphate = orotate + 5-phospho-alpha-D-ribose 1-diphosphate. Its pathway is pyrimidine metabolism; UMP biosynthesis via de novo pathway; UMP from orotate: step 1/2. In terms of biological role, catalyzes the transfer of a ribosyl phosphate group from 5-phosphoribose 1-diphosphate to orotate, leading to the formation of orotidine monophosphate (OMP). This is Orotate phosphoribosyltransferase from Clostridium botulinum (strain ATCC 19397 / Type A).